The primary structure comprises 176 residues: Sigma intracellular receptor 2 (176 aa).

Residues 1-9 (MGALAARRC) lie on the Cytoplasmic side of the membrane. A helical transmembrane segment spans residues 10-30 (VEWLLGLYFVSHIPITLFIDL). Residues 10 to 158 (VEWLLGLYFV…PYLIIPLILL (149 aa)) enclose the EXPERA domain. At 31 to 68 (QAVLPPELYPQEFSNLLRWYSKEFKDPLMQEPPVWFKS) the chain is on the lumenal side. A helical membrane pass occupies residues 69 to 89 (FLLCELVFQLPFFPIAAYAFF). The cholesterol site is built by Val-75 and Gln-77. Over 90 to 99 (KGSCRWIRIP) the chain is Cytoplasmic. A helical membrane pass occupies residues 100-120 (AIIYAAHTITTLIPILYTLLF). Topologically, residues 121–140 (EDFSKAVAFKGQRPESFRER) are lumenal. The chain crosses the membrane as a helical span at residues 141-161 (LTLVGVYAPYLIIPLILLLFM). Over 162–176 (LRNPYYKYEEKRKKK) the chain is Cytoplasmic. The ER retention motif motif lies at 172–176 (KRKKK).

It belongs to the TMEM97/sigma-2 receptor family. As to quaternary structure, homodimer. Interacts with NPC1; the interaction impairs NPC1-mediated cholesterol transport. Interacts with PGRMC1 and LDLR; the interaction increases LDL internalization. Interacts with histatin 1/HTN1; the interaction induces HTN1-stimulating wound healing. Interacts with TSPO.

It is found in the rough endoplasmic reticulum membrane. Its subcellular location is the nucleus membrane. In terms of biological role, sigma-2 receptor which contributes to ameliorate dysfunctional cellular processes and slow degenerative progression by regulating cell functions including cholesterol biosynthesis/trafficking, membrane trafficking, autophagy, lipid membrane-bound protein trafficking, and receptor stabilization at the cell surface. Forms a ternary complex with PGRMC1 receptor and low density lipoprotein receptor/LDLR at the plasma membrane, which increases LDLR-mediated LDL cholesterol internalization. Decreases lysosomal sterol transporter NPC1 availability to the cell, probably through NPC1-binding, hence controlling lipid transport, including cholesterol and LBPA, outside of late endosome/lysosome. Binds regio- and stereoselective ligand 20(S)-hydroxycholesterol (20(S)-OHC) which enhances TMEM97-NPC1 interaction and decreases TMEM97-PGRMC1 and TMEM97-TSPO interactions, thereby linking OHC binding to cholesterol homeostasis. Also able to bind cholesterol. Binds histatin 1 (Hst 1)/HN1 salivary peptide at the ER membrane, which is critical for increasing mitochondria-ER contacts and stimulating Hst1 wound healing properties. May alter the activity of some cytochrome P450 proteins. Although shows homologies with sterol isomerases (EXPERA domain), not able to catalyze sterol isomerization. However, may act as sensors of these molecules. Acts as a quality control factor in the ER, promoting the proteolytic degradation of nonproductive and extramitochondrial precursor proteins in the ER membrane thus removing them from the ER surface. This Mus musculus (Mouse) protein is Sigma intracellular receptor 2.